Consider the following 257-residue polypeptide: 4-hydroxy-tetrahydrodipicolinate reductase (257 aa).

NAD(+) is bound by residues Gly7 to Met12, Asp32, Gly91 to Thr93, and Ser115 to Phe118. Catalysis depends on His147, which acts as the Proton donor/acceptor. His148 contributes to the (S)-2,3,4,5-tetrahydrodipicolinate binding site. Catalysis depends on Lys151, which acts as the Proton donor. A (S)-2,3,4,5-tetrahydrodipicolinate-binding site is contributed by Gly157–Thr158.

It belongs to the DapB family.

The protein resides in the cytoplasm. The catalysed reaction is (S)-2,3,4,5-tetrahydrodipicolinate + NAD(+) + H2O = (2S,4S)-4-hydroxy-2,3,4,5-tetrahydrodipicolinate + NADH + H(+). It catalyses the reaction (S)-2,3,4,5-tetrahydrodipicolinate + NADP(+) + H2O = (2S,4S)-4-hydroxy-2,3,4,5-tetrahydrodipicolinate + NADPH + H(+). It functions in the pathway amino-acid biosynthesis; L-lysine biosynthesis via DAP pathway; (S)-tetrahydrodipicolinate from L-aspartate: step 4/4. Its function is as follows. Catalyzes the conversion of 4-hydroxy-tetrahydrodipicolinate (HTPA) to tetrahydrodipicolinate. This is 4-hydroxy-tetrahydrodipicolinate reductase from Archaeoglobus fulgidus (strain ATCC 49558 / DSM 4304 / JCM 9628 / NBRC 100126 / VC-16).